Here is a 110-residue protein sequence, read N- to C-terminus: Large ribosomal subunit protein uL22 (110 aa).

Basic residues predominate over residues 84 to 95; that stretch reads ARGTASKIRKPT. Residues 84 to 110 are disordered; that stretch reads ARGTASKIRKPTSHVMVEVSKPEKKEA.

It belongs to the universal ribosomal protein uL22 family. In terms of assembly, part of the 50S ribosomal subunit.

Functionally, this protein binds specifically to 23S rRNA; its binding is stimulated by other ribosomal proteins, e.g. L4, L17, and L20. It is important during the early stages of 50S assembly. It makes multiple contacts with different domains of the 23S rRNA in the assembled 50S subunit and ribosome. The globular domain of the protein is located near the polypeptide exit tunnel on the outside of the subunit, while an extended beta-hairpin is found that lines the wall of the exit tunnel in the center of the 70S ribosome. The sequence is that of Large ribosomal subunit protein uL22 from Campylobacter concisus (strain 13826).